A 31-amino-acid polypeptide reads, in one-letter code: Chassatide C5 (31 aa).

The segment at residues 1 to 31 is a cross-link (cyclopeptide (Gly-Asn)); it reads GVIPCGESCVFIPCISSVVGCSCKNKVCYRN. 3 disulfides stabilise this stretch: cysteine 5/cysteine 21, cysteine 9/cysteine 23, and cysteine 14/cysteine 28.

In terms of processing, this is a cyclic peptide. Expressed in pedicel, root and stem but not in leaf and fruit (at protein level).

Its function is as follows. Probably participates in a plant defense mechanism. The protein is Chassatide C5 of Chassalia chartacea (Chassalia curviflora).